The sequence spans 1435 residues: Gag-Pol polyprotein (1435 aa).

Gly2 is lipidated: N-myristoyl glycine; by host. The interaction with Gp41 stretch occupies residues 7–31; it reads VLSGGKLDKWEKIRLRPGGKKKYRL. The segment at 8 to 43 is interaction with host CALM1; it reads LSGGKLDKWEKIRLRPGGKKKYRLKHIVWASRELER. An interaction with host AP3D1 region spans residues 12–19; the sequence is KLDKWEKI. The tract at residues 14-33 is interaction with membrane phosphatidylinositol 4,5-bisphosphate and RNA; that stretch reads DKWEKIRLRPGGKKKYRLKH. The Nuclear export signal motif lies at 16 to 22; sequence WEKIRLR. The Nuclear localization signal motif lies at 26–32; that stretch reads KKKYRLK. Positions 73 to 77 are interaction with membrane phosphatidylinositol 4,5-bisphosphate; the sequence is EELRS. A disordered region spans residues 102-128; that stretch reads EKMEEEQNKSKKKAQQAAADTGNNSQV. Tyr132 is subject to Phosphotyrosine; by host. The interaction with human PPIA/CYPA and NUP153 stretch occupies residues 189–227; it reads NTVGGHQAAMQMLKETINEEAAEWDRLHPVHAGPIAPGQ. The segment at 277–363 is dimerization/Multimerization of capsid protein p24; it reads YSPVSILDIR…GGPSHKARVL (87 aa). CCHC-type zinc fingers lie at residues 391–408 and 412–429; these read IKCF…NCRA and KGCW…DCTE. A dimerization of protease region spans residues 489-493; it reads PQITL. One can recognise a Peptidase A2 domain in the interval 508–577; the sequence is KEALLDTGAD…TPVNIIGRNL (70 aa). Asp513 (for protease activity; shared with dimeric partner) is an active-site residue. 2 dimerization of protease regions span residues 537 to 543 and 576 to 588; these read GIGGFIK and NLLT…LNFP. The Reverse transcriptase domain maps to 631-821; it reads EGKISRIGPE…PPFLWMGYEL (191 aa). Mg(2+) is bound by residues Asp697, Asp772, and Asp773. The tract at residues 814–822 is RT 'primer grip'; that stretch reads FLWMGYELH. Positions 985 to 1001 match the Tryptophan repeat motif motif; the sequence is WETWWAEYWQATWIPEW. Residues 1021 to 1144 enclose the RNase H type-1 domain; that stretch reads IIGAETFYVD…VDKLVSQGIR (124 aa). Residues Asp1030, Glu1065, Asp1085, and Asp1136 each coordinate Mg(2+). An Integrase-type zinc finger spans residues 1150–1191; the sequence is DGIDKAQEEHEKYHNNWRAMASDFNLPPVVAKEIVASCDKCQ. Residues His1159, His1163, Cys1187, and Cys1190 each contribute to the Zn(2+) site. An Integrase catalytic domain is found at 1201–1351; it reads VDCSPGIWQL…SAGERIIDII (151 aa). Positions 1211, 1263, and 1299 each coordinate Mg(2+). The segment at residues 1370 to 1417 is a DNA-binding region (integrase-type); the sequence is FRVYYRDSRDPIWKGPAKLLWKGEGAVVIQDKSDIKVVPRRKVKIIRD.

In terms of assembly, homotrimer; further assembles as hexamers of trimers. Interacts with gp41 (via C-terminus). Interacts with host CALM1; this interaction induces a conformational change in the Matrix protein, triggering exposure of the myristate group. Interacts with host AP3D1; this interaction allows the polyprotein trafficking to multivesicular bodies during virus assembly. Part of the pre-integration complex (PIC) which is composed of viral genome, matrix protein, Vpr and integrase. As to quaternary structure, homodimer; the homodimer further multimerizes as homohexamers or homopentamers. Interacts with human PPIA/CYPA; This interaction stabilizes the capsid. Interacts with human NUP153. Interacts with host PDZD8; this interaction stabilizes the capsid. Interacts with monkey TRIM5; this interaction destabilizes the capsid. Homodimer, whose active site consists of two apposed aspartic acid residues. In terms of assembly, heterodimer of p66 RT and p51 RT (RT p66/p51). Heterodimerization of RT is essential for DNA polymerase activity. The overall folding of the subdomains is similar in p66 RT and p51 RT but the spatial arrangements of the subdomains are dramatically different. As to quaternary structure, homotetramer; may further associate as a homohexadecamer. Part of the pre-integration complex (PIC) which is composed of viral genome, matrix protein, Vpr and integrase. Interacts with human SMARCB1/INI1 and human PSIP1/LEDGF isoform 1. Interacts with human KPNA3; this interaction might play a role in nuclear import of the pre-integration complex. Interacts with human NUP153; this interaction might play a role in nuclear import of the pre-integration complex. The cofactor is Mg(2+). In terms of processing, specific enzymatic cleavages by the viral protease yield mature proteins. The protease is released by autocatalytic cleavage. The polyprotein is cleaved during and after budding, this process is termed maturation. Proteolytic cleavage of p66 RT removes the RNase H domain to yield the p51 RT subunit. Nucleocapsid protein p7 might be further cleaved after virus entry. Tyrosine phosphorylated presumably in the virion by a host kinase. Phosphorylation is apparently not a major regulator of membrane association. Post-translationally, phosphorylated possibly by host MAPK1; this phosphorylation is necessary for Pin1-mediated virion uncoating. In terms of processing, methylated by host PRMT6, impairing its function by reducing RNA annealing and the initiation of reverse transcription.

Its subcellular location is the host cell membrane. The protein resides in the host endosome. It is found in the host multivesicular body. It localises to the virion membrane. The protein localises to the host nucleus. Its subcellular location is the host cytoplasm. The protein resides in the virion. It catalyses the reaction Specific for a P1 residue that is hydrophobic, and P1' variable, but often Pro.. The catalysed reaction is Endohydrolysis of RNA in RNA/DNA hybrids. Three different cleavage modes: 1. sequence-specific internal cleavage of RNA. Human immunodeficiency virus type 1 and Moloney murine leukemia virus enzymes prefer to cleave the RNA strand one nucleotide away from the RNA-DNA junction. 2. RNA 5'-end directed cleavage 13-19 nucleotides from the RNA end. 3. DNA 3'-end directed cleavage 15-20 nucleotides away from the primer terminus.. It carries out the reaction 3'-end directed exonucleolytic cleavage of viral RNA-DNA hybrid.. The enzyme catalyses DNA(n) + a 2'-deoxyribonucleoside 5'-triphosphate = DNA(n+1) + diphosphate. Its activity is regulated as follows. Protease: The viral protease is inhibited by many synthetic protease inhibitors (PIs), such as amprenavir, atazanavir, indinavir, loprinavir, nelfinavir, ritonavir and saquinavir. Use of protease inhibitors in tritherapy regimens permit more ambitious therapeutic strategies. Reverse transcriptase/ribonuclease H: RT can be inhibited either by nucleoside RT inhibitors (NRTIs) or by non nucleoside RT inhibitors (NNRTIs). NRTIs act as chain terminators, whereas NNRTIs inhibit DNA polymerization by binding a small hydrophobic pocket near the RT active site and inducing an allosteric change in this region. Classical NRTIs are abacavir, adefovir (PMEA), didanosine (ddI), lamivudine (3TC), stavudine (d4T), tenofovir (PMPA), zalcitabine (ddC), and zidovudine (AZT). Classical NNRTIs are atevirdine (BHAP U-87201E), delavirdine, efavirenz (DMP-266), emivirine (I-EBU), and nevirapine (BI-RG-587). The tritherapies used as a basic effective treatment of AIDS associate two NRTIs and one NNRTI. Mediates, with Gag polyprotein, the essential events in virion assembly, including binding the plasma membrane, making the protein-protein interactions necessary to create spherical particles, recruiting the viral Env proteins, and packaging the genomic RNA via direct interactions with the RNA packaging sequence (Psi). Gag-Pol polyprotein may regulate its own translation, by the binding genomic RNA in the 5'-UTR. At low concentration, the polyprotein would promote translation, whereas at high concentration, the polyprotein would encapsidate genomic RNA and then shut off translation. Functionally, targets the polyprotein to the plasma membrane via a multipartite membrane-binding signal, that includes its myristoylated N-terminus. Matrix protein is part of the pre-integration complex. Implicated in the release from host cell mediated by Vpu. Binds to RNA. Its function is as follows. Forms the conical core that encapsulates the genomic RNA-nucleocapsid complex in the virion. Most core are conical, with only 7% tubular. The core is constituted by capsid protein hexamer subunits. The core is disassembled soon after virion entry. Host restriction factors such as TRIM5-alpha or TRIMCyp bind retroviral capsids and cause premature capsid disassembly, leading to blocks in reverse transcription. Capsid restriction by TRIM5 is one of the factors which restricts HIV-1 to the human species. Host PIN1 apparently facilitates the virion uncoating. On the other hand, interactions with PDZD8 or CYPA stabilize the capsid. In terms of biological role, encapsulates and protects viral dimeric unspliced genomic RNA (gRNA). Binds these RNAs through its zinc fingers. Acts as a nucleic acid chaperone which is involved in rearangement of nucleic acid secondary structure during gRNA retrotranscription. Also facilitates template switch leading to recombination. As part of the polyprotein, participates in gRNA dimerization, packaging, tRNA incorporation and virion assembly. Aspartyl protease that mediates proteolytic cleavages of Gag and Gag-Pol polyproteins during or shortly after the release of the virion from the plasma membrane. Cleavages take place as an ordered, step-wise cascade to yield mature proteins. This process is called maturation. Displays maximal activity during the budding process just prior to particle release from the cell. Also cleaves Nef and Vif, probably concomitantly with viral structural proteins on maturation of virus particles. Hydrolyzes host EIF4GI and PABP1 in order to shut off the capped cellular mRNA translation. The resulting inhibition of cellular protein synthesis serves to ensure maximal viral gene expression and to evade host immune response. Also mediates cleavage of host YTHDF3. Mediates cleavage of host CARD8, thereby activating the CARD8 inflammasome, leading to the clearance of latent HIV-1 in patient CD4(+) T-cells after viral reactivation; in contrast, HIV-1 can evade CARD8-sensing when its protease remains inactive in infected cells prior to viral budding. Functionally, multifunctional enzyme that converts the viral RNA genome into dsDNA in the cytoplasm, shortly after virus entry into the cell. This enzyme displays a DNA polymerase activity that can copy either DNA or RNA templates, and a ribonuclease H (RNase H) activity that cleaves the RNA strand of RNA-DNA heteroduplexes in a partially processive 3' to 5' endonucleasic mode. Conversion of viral genomic RNA into dsDNA requires many steps. A tRNA(3)-Lys binds to the primer-binding site (PBS) situated at the 5'-end of the viral RNA. RT uses the 3' end of the tRNA primer to perform a short round of RNA-dependent minus-strand DNA synthesis. The reading proceeds through the U5 region and ends after the repeated (R) region which is present at both ends of viral RNA. The portion of the RNA-DNA heteroduplex is digested by the RNase H, resulting in a ssDNA product attached to the tRNA primer. This ssDNA/tRNA hybridizes with the identical R region situated at the 3' end of viral RNA. This template exchange, known as minus-strand DNA strong stop transfer, can be either intra- or intermolecular. RT uses the 3' end of this newly synthesized short ssDNA to perform the RNA-dependent minus-strand DNA synthesis of the whole template. RNase H digests the RNA template except for two polypurine tracts (PPTs) situated at the 5'-end and near the center of the genome. It is not clear if both polymerase and RNase H activities are simultaneous. RNase H probably can proceed both in a polymerase-dependent (RNA cut into small fragments by the same RT performing DNA synthesis) and a polymerase-independent mode (cleavage of remaining RNA fragments by free RTs). Secondly, RT performs DNA-directed plus-strand DNA synthesis using the PPTs that have not been removed by RNase H as primers. PPTs and tRNA primers are then removed by RNase H. The 3' and 5' ssDNA PBS regions hybridize to form a circular dsDNA intermediate. Strand displacement synthesis by RT to the PBS and PPT ends produces a blunt ended, linear dsDNA copy of the viral genome that includes long terminal repeats (LTRs) at both ends. Its function is as follows. Catalyzes viral DNA integration into the host chromosome, by performing a series of DNA cutting and joining reactions. This enzyme activity takes place after virion entry into a cell and reverse transcription of the RNA genome in dsDNA. The first step in the integration process is 3' processing. This step requires a complex comprising the viral genome, matrix protein, Vpr and integrase. This complex is called the pre-integration complex (PIC). The integrase protein removes 2 nucleotides from each 3' end of the viral DNA, leaving recessed CA OH's at the 3' ends. In the second step, the PIC enters cell nucleus. This process is mediated through integrase and Vpr proteins, and allows the virus to infect a non dividing cell. This ability to enter the nucleus is specific of lentiviruses, other retroviruses cannot and rely on cell division to access cell chromosomes. In the third step, termed strand transfer, the integrase protein joins the previously processed 3' ends to the 5' ends of strands of target cellular DNA at the site of integration. The 5'-ends are produced by integrase-catalyzed staggered cuts, 5 bp apart. A Y-shaped, gapped, recombination intermediate results, with the 5'-ends of the viral DNA strands and the 3' ends of target DNA strands remaining unjoined, flanking a gap of 5 bp. The last step is viral DNA integration into host chromosome. This involves host DNA repair synthesis in which the 5 bp gaps between the unjoined strands are filled in and then ligated. Since this process occurs at both cuts flanking the HIV genome, a 5 bp duplication of host DNA is produced at the ends of HIV-1 integration. Alternatively, Integrase may catalyze the excision of viral DNA just after strand transfer, this is termed disintegration. This is Gag-Pol polyprotein (gag-pol) from Human immunodeficiency virus type 1 group M subtype D (isolate ELI) (HIV-1).